Consider the following 69-residue polypeptide: Toxin Tma3 (69 aa).

The 65-residue stretch at 2 to 66 folds into the LCN-type CS-alpha/beta domain; it reads KDDYPVDTAK…SPTKKSGRCN (65 aa). Intrachain disulfides connect Cys14-Cys65, Cys18-Cys41, Cys27-Cys48, and Cys31-Cys50.

This sequence belongs to the long (4 C-C) scorpion toxin superfamily. Sodium channel inhibitor family. Expressed by the venom gland.

The protein localises to the secreted. Functionally, inhibits voltage-gated sodium channels (Nav). This toxin shows insect lethality against crickets. The sequence is that of Toxin Tma3 from Tityus macrochirus (Scorpion).